We begin with the raw amino-acid sequence, 136 residues long: Cytochrome c oxidase subunit 13, mitochondrial (136 aa).

A mitochondrion-targeting transit peptide spans 1–29; that stretch reads MFAQRQMFFARLAANLRAPAVRQTVQRRF. Over 30-62 the chain is Mitochondrial matrix; sequence ASTPANESGKNAFVREREAVKQHAAETTELWRK. Residues 63 to 83 traverse the membrane as a helical segment; the sequence is ISLYGIPPALALAGYNAYTLY. Residues 84–136 are Mitochondrial intermembrane-facing; the sequence is NEHWEHWSHLPPLEERTEYPYQNIRTRNYPWGDGDKTLFWNESVNYHNRDKVT.

This sequence belongs to the cytochrome c oxidase subunit 6A family. In terms of assembly, component of the cytochrome c oxidase (complex IV, CIV), a multisubunit enzyme composed of 11 subunits. The complex is composed of a catalytic core of 3 subunits Cox1, Cox2 and Cox3, encoded in the mitochondrial DNA, and 8 supernumerary subunits Cox4, Cox5a/Cox5, Cox6, Cox7, Cox8, Cox7a/Cox9, Cox6b/Cox12 and Cox6a/Cox13, which are encoded in the nuclear genome. The complex exists as a monomer or a dimer and forms respiratory supercomplexes (SCs) in the inner mitochondrial membrane with NADH-ubiquinone oxidoreductase (complex I, CI) and ubiquinol-cytochrome c oxidoreductase (cytochrome b-c1 complex, complex III, CIII), resulting in various different assemblies (supercomplexes I(1)IV(1), I(1)III(3)IV(2), III(2)IV(1) and III(2)IV(2) as well as larger supercomplexes of compositions like I(1)III(2)IV(5-6)). Cox6a/Cox13 was not present in the cryo-EM structure. It may be involved in complex IV dimer formation and might not be always expressed. This would explain its absence in the map of the isolated monomer.

Its subcellular location is the mitochondrion inner membrane. Its pathway is energy metabolism; oxidative phosphorylation. In terms of biological role, component of the cytochrome c oxidase, the last enzyme in the mitochondrial electron transport chain which drives oxidative phosphorylation. The respiratory chain contains 3 multisubunit complexes succinate dehydrogenase (complex II, CII), ubiquinol-cytochrome c oxidoreductase (cytochrome b-c1 complex, complex III, CIII) and cytochrome c oxidase (complex IV, CIV), that cooperate to transfer electrons derived from NADH and succinate to molecular oxygen, creating an electrochemical gradient over the inner membrane that drives transmembrane transport and the ATP synthase. Cytochrome c oxidase is the component of the respiratory chain that catalyzes the reduction of oxygen to water. Electrons originating from reduced cytochrome c in the intermembrane space (IMS) are transferred via the dinuclear copper A center (CU(A)) of Cox2 and heme A of Cox1 to the active site in Cox1, a binuclear center (BNC) formed by heme A3 and copper B (CU(B)). The BNC reduces molecular oxygen to 2 water molecules using 4 electrons from cytochrome c in the IMS and 4 protons from the mitochondrial matrix. The chain is Cytochrome c oxidase subunit 13, mitochondrial (eat-5) from Neurospora crassa (strain ATCC 24698 / 74-OR23-1A / CBS 708.71 / DSM 1257 / FGSC 987).